A 238-amino-acid chain; its full sequence is Enolase-phosphatase E1 (238 aa).

Residues Asp14 and Glu16 each contribute to the Mg(2+) site. Residues 128–129 (SS) and Lys165 each bind substrate. Residue Asp192 participates in Mg(2+) binding.

Belongs to the HAD-like hydrolase superfamily. MasA/MtnC family. In terms of assembly, monomer. It depends on Mg(2+) as a cofactor.

The protein localises to the cytoplasm. The protein resides in the nucleus. It carries out the reaction 5-methylsulfanyl-2,3-dioxopentyl phosphate + H2O = 1,2-dihydroxy-5-(methylsulfanyl)pent-1-en-3-one + phosphate. Its pathway is amino-acid biosynthesis; L-methionine biosynthesis via salvage pathway; L-methionine from S-methyl-5-thio-alpha-D-ribose 1-phosphate: step 3/6. It functions in the pathway amino-acid biosynthesis; L-methionine biosynthesis via salvage pathway; L-methionine from S-methyl-5-thio-alpha-D-ribose 1-phosphate: step 4/6. Bifunctional enzyme that catalyzes the enolization of 2,3-diketo-5-methylthiopentyl-1-phosphate (DK-MTP-1-P) into the intermediate 2-hydroxy-3-keto-5-methylthiopentenyl-1-phosphate (HK-MTPenyl-1-P), which is then dephosphorylated to form the acireductone 1,2-dihydroxy-3-keto-5-methylthiopentene (DHK-MTPene). The sequence is that of Enolase-phosphatase E1 from Fusarium vanettenii (strain ATCC MYA-4622 / CBS 123669 / FGSC 9596 / NRRL 45880 / 77-13-4) (Fusarium solani subsp. pisi).